The following is a 189-amino-acid chain: Chitin synthase 2 (189 aa).

Belongs to the chitin synthase family. Class II subfamily.

Its subcellular location is the cell membrane. The catalysed reaction is [(1-&gt;4)-N-acetyl-beta-D-glucosaminyl](n) + UDP-N-acetyl-alpha-D-glucosamine = [(1-&gt;4)-N-acetyl-beta-D-glucosaminyl](n+1) + UDP + H(+). Functionally, polymerizes chitin, a structural polymer of the cell wall and septum, by transferring the sugar moiety of UDP-GlcNAc to the non-reducing end of the growing chitin polymer. This chain is Chitin synthase 2 (chs2), found in Aspergillus niger.